Here is a 130-residue protein sequence, read N- to C-terminus: Small ribosomal subunit protein uS9 (130 aa).

It belongs to the universal ribosomal protein uS9 family.

This chain is Small ribosomal subunit protein uS9, found in Aromatoleum aromaticum (strain DSM 19018 / LMG 30748 / EbN1) (Azoarcus sp. (strain EbN1)).